The following is a 194-amino-acid chain: Imidazoleglycerol-phosphate dehydratase (194 aa).

Belongs to the imidazoleglycerol-phosphate dehydratase family.

The protein localises to the cytoplasm. The enzyme catalyses D-erythro-1-(imidazol-4-yl)glycerol 3-phosphate = 3-(imidazol-4-yl)-2-oxopropyl phosphate + H2O. Its pathway is amino-acid biosynthesis; L-histidine biosynthesis; L-histidine from 5-phospho-alpha-D-ribose 1-diphosphate: step 6/9. This chain is Imidazoleglycerol-phosphate dehydratase, found in Bacillus thuringiensis (strain Al Hakam).